Here is an 810-residue protein sequence, read N- to C-terminus: Plasminogen (810 aa).

The N-terminal stretch at 1–19 (MEHKEVVLLLLLFLKSGQG) is a signal peptide. The region spanning 20 to 98 (EPLDDYVNTQ…RDVVLFEKKV (79 aa)) is the PAN domain. 12 disulfide bridges follow: C49-C73, C53-C61, C103-C181, C124-C164, C152-C176, C185-C262, C188-C316, C206-C245, C234-C257, C275-C352, C296-C335, and C324-C347. 2 Kringle domains span residues 103-181 (CKTG…ILEC) and 184-262 (ECMH…IPRC). The tract at residues 126–145 (KWSSTSPHRPRFSPATHPSE) is disordered. Positions 136, 158, and 172 each coordinate L-lysine. S268 carries an O-linked (GalNAc...) serine glycan. Residues 275–352 (CLKGTGENYR…RWEYCKIPSC (78 aa)) form the Kringle 3 domain. N308 is a glycosylation site (N-linked (GlcNAc...) asparagine). O-linked (GalNAc...) threonine glycosylation is present at T365. Intrachain disulfides connect C377/C454, C398/C437, C426/C449, C481/C560, C502/C543, C531/C555, C567/C685, C577/C585, and C607/C623. Kringle domains follow at residues 377–454 (CYHG…LKKC) and 481–560 (CMFG…VPQC). Residues 396-416 (KKCQSWSSMTPHRHQKTPENY) are disordered. 2 residues coordinate L-lysine: D432 and R445. The region spanning 581 to 808 (VVGGCVAHPH…FVTWIEGVMR (228 aa)) is the Peptidase S1 domain. Phosphoserine is present on S597. Catalysis depends on charge relay system residues H622 and D665. S688 is subject to Phosphoserine. 3 cysteine pairs are disulfide-bonded: C699–C766, C729–C745, and C756–C784. Catalysis depends on S760, which acts as the Charge relay system.

This sequence belongs to the peptidase S1 family. Plasminogen subfamily. Interacts (both mature PLG and the angiostatin peptide) with CSPG4 and AMOT. Interacts (via the Kringle domains) with HRG; the interaction tethers PLG to the cell surface and enhances its activation. Interacts (via Kringle 4 domain) with ADA; the interaction stimulates PLG activation when in complex with DPP4. Angiostatin: Interacts with ATP5F1A; the interaction inhibits most of the angiogenic effects of angiostatin. Interacts (plasmin) with iripin-8, a serine protease inhibitor from Ixodes ricinus saliva. Interacts (plasmin) with iripin-1, a serine protease inhibitor from Ixodes ricinus saliva. Interacts (plasmin) with Kazal-type trypsin inhibitor, a serine protease inhibitor from Aedes aegypti. In terms of assembly, (Microbial infection) Interacts with C.albicans GPD2; the interaction is direct and provides active plasmin on the surface of fungal cells. As to quaternary structure, (Microbial infection) Interacts with Staphylococcus aureus protein FnbB; this interaction provides active plasmin on the surface of bacterial cells. (Microbial infection) Interacts with P.falciparum (strain NF54) enolase ENO (via DKSLVK motif); the interaction occurs at the ookinete cell surface and is required for ookinete invasion of the mosquito midgut. In terms of assembly, (Microbial infection) Interacts with B.burgdorferi OspC. N-linked glycan contains N-acetyllactosamine and sialic acid. O-linked glycans consist of Gal-GalNAc disaccharide modified with up to 2 sialic acid residues (microheterogeneity). In terms of processing, in the presence of the inhibitor, the activation involves only cleavage after Arg-580, yielding two chains held together by two disulfide bonds. In the absence of the inhibitor, the activation involves additionally the removal of the activation peptide. Post-translationally, (Microbial infection) The Y.pestis Pla protein cleaves between Arg-580 and Val-581, generating plasmin which facilitates bacterial migration and infection. Present in plasma and many other extracellular fluids. It is synthesized in the liver.

Its subcellular location is the secreted. It catalyses the reaction Preferential cleavage: Lys-|-Xaa &gt; Arg-|-Xaa, higher selectivity than trypsin. Converts fibrin into soluble products.. Converted into plasmin by plasminogen activators, both plasminogen and its activator being bound to fibrin. Activated with catalytic amounts of streptokinase. Plasmin activity inhibited by SERPINE2. Plasmin dissolves the fibrin of blood clots and acts as a proteolytic factor in a variety of other processes including embryonic development, tissue remodeling, tumor invasion, and inflammation. In ovulation, weakens the walls of the Graafian follicle. It activates the urokinase-type plasminogen activator, collagenases and several complement zymogens, such as C1, C4 and C5. Cleavage of fibronectin and laminin leads to cell detachment and apoptosis. Also cleaves fibrin, thrombospondin and von Willebrand factor. Its role in tissue remodeling and tumor invasion may be modulated by CSPG4. Binds to cells. Functionally, angiostatin is an angiogenesis inhibitor that blocks neovascularization and growth of experimental primary and metastatic tumors in vivo. In terms of biological role, (Microbial infection) ENO/enoloase from parasite P.falciparum (strain NF54) interacts with PLG present in the mosquito blood meal to promote the invasion of the mosquito midgut by the parasite ookinete. The catalytic active form, plasmin, is essential for the invasion of the mosquito midgut. Its function is as follows. (Microbial infection) Binds to OspC on the surface of B.burgdorferi cells, possibly conferring an extracellular protease activity on the bacteria that allows it to traverse host tissue. (Microbial infection) Interacts with dengue virus type 2 particles. Enhances dengue virus type 2 infection in Aedes aegypti mosquito midgut by increasing midgut internalization, resulting in higher infection rates and viral dissemination in mosquitoes. The sequence is that of Plasminogen (PLG) from Homo sapiens (Human).